A 186-amino-acid chain; its full sequence is Pyridoxal 5'-phosphate synthase subunit PdxT (186 aa).

46 to 48 provides a ligand contact to L-glutamine; sequence GES. Catalysis depends on Cys-78, which acts as the Nucleophile. L-glutamine is bound by residues Arg-105 and 134 to 135; that span reads IR. Active-site charge relay system residues include His-170 and Glu-172.

Belongs to the glutaminase PdxT/SNO family. In the presence of PdxS, forms a dodecamer of heterodimers. Only shows activity in the heterodimer.

It carries out the reaction aldehydo-D-ribose 5-phosphate + D-glyceraldehyde 3-phosphate + L-glutamine = pyridoxal 5'-phosphate + L-glutamate + phosphate + 3 H2O + H(+). It catalyses the reaction L-glutamine + H2O = L-glutamate + NH4(+). The protein operates within cofactor biosynthesis; pyridoxal 5'-phosphate biosynthesis. Its function is as follows. Catalyzes the hydrolysis of glutamine to glutamate and ammonia as part of the biosynthesis of pyridoxal 5'-phosphate. The resulting ammonia molecule is channeled to the active site of PdxS. This Clostridium acetobutylicum (strain ATCC 824 / DSM 792 / JCM 1419 / IAM 19013 / LMG 5710 / NBRC 13948 / NRRL B-527 / VKM B-1787 / 2291 / W) protein is Pyridoxal 5'-phosphate synthase subunit PdxT.